The following is a 520-amino-acid chain: MKTKELTQSKIEEVSLEILLRHAVKAKHGLEKESMRVNPDGTLSGTTHPIHLGSSLTNHYIKTDFAEPQLEYATHPRPKVEANIRELQDLHIFTIRKLENELIWPFSMPPVLPEEENEIPLGQYGTSHSGRWKTIYRHGLGLRYGRRMQTISGVHYNFSFSKVFLRQFLGKEISNFTKEEISSLYLHVIRNFLRRVHFLTYLTGSSPVFDFTFLPNPGSLKFEKHKNFTLYSTYATSLRMSEIGYTSKVQDTLGIHYNSLEEYVDRMCYAVHTPYPKYVSFSENKDAQLNPNYLQIENEFYSPIRPKQIPKGDERPLDALLQRGIEYIEIRSLDIDPYSPVGVCRSNLAFTQLILLDSLLKVSPSISEEENFSLKENLNSVIWEGRNPELKINVNGSKRNFQEAGAEYSESLRHYAKILDLHTGRRTYQEAIDFQIKKWKNPDKTPSGKLLSEILKRNIEFREKGIELAQENKRMFSYLEYSPGTLMKMEKETIRSFQEKEELEKQEIQTQYPTVKLCNH.

The protein belongs to the glutamate--cysteine ligase type 1 family. Type 1 subfamily.

The catalysed reaction is L-cysteine + L-glutamate + ATP = gamma-L-glutamyl-L-cysteine + ADP + phosphate + H(+). It functions in the pathway sulfur metabolism; glutathione biosynthesis; glutathione from L-cysteine and L-glutamate: step 1/2. This Leptospira interrogans serogroup Icterohaemorrhagiae serovar copenhageni (strain Fiocruz L1-130) protein is Glutamate--cysteine ligase.